Reading from the N-terminus, the 365-residue chain is tRNA-specific 2-thiouridylase MnmA (365 aa).

Residues 14-21 and leucine 40 contribute to the ATP site; that span reads AMSGGVDS. The active-site Nucleophile is the cysteine 108. A disulfide bridge links cysteine 108 with cysteine 204. Residue glycine 132 coordinates ATP. Residues 154–156 form an interaction with tRNA region; that stretch reads KDQ. The Cysteine persulfide intermediate role is filled by cysteine 204.

Belongs to the MnmA/TRMU family.

The protein resides in the cytoplasm. It carries out the reaction S-sulfanyl-L-cysteinyl-[protein] + uridine(34) in tRNA + AH2 + ATP = 2-thiouridine(34) in tRNA + L-cysteinyl-[protein] + A + AMP + diphosphate + H(+). Its function is as follows. Catalyzes the 2-thiolation of uridine at the wobble position (U34) of tRNA, leading to the formation of s(2)U34. The protein is tRNA-specific 2-thiouridylase MnmA of Rickettsia massiliae (strain Mtu5).